The chain runs to 118 residues: Large ribosomal subunit protein mL53 (118 aa).

Positions 99-118 (AAAASAPGADKVAPGTSTRR) are disordered.

The protein belongs to the mitochondrion-specific ribosomal protein mL53 family. Component of the mitochondrial ribosome large subunit (39S) which comprises a 16S rRNA and about 50 distinct proteins.

The protein resides in the mitochondrion. The protein is Large ribosomal subunit protein mL53 (Mrpl53) of Mus musculus (Mouse).